The following is a 332-amino-acid chain: Tetraacyldisaccharide 4'-kinase (332 aa).

60-67 (TVGGTGKT) contacts ATP.

The protein belongs to the LpxK family.

It carries out the reaction a lipid A disaccharide + ATP = a lipid IVA + ADP + H(+). The protein operates within glycolipid biosynthesis; lipid IV(A) biosynthesis; lipid IV(A) from (3R)-3-hydroxytetradecanoyl-[acyl-carrier-protein] and UDP-N-acetyl-alpha-D-glucosamine: step 6/6. Transfers the gamma-phosphate of ATP to the 4'-position of a tetraacyldisaccharide 1-phosphate intermediate (termed DS-1-P) to form tetraacyldisaccharide 1,4'-bis-phosphate (lipid IVA). The chain is Tetraacyldisaccharide 4'-kinase from Pseudomonas aeruginosa (strain LESB58).